Reading from the N-terminus, the 219-residue chain is Small ribosomal subunit protein uS3c (219 aa).

Residues 43–118 form the KH type-2 domain; it reads IKNYVQKNMK…KLNIAITRIA (76 aa).

The protein belongs to the universal ribosomal protein uS3 family. Part of the 30S ribosomal subunit.

The protein resides in the plastid. The protein localises to the chloroplast. This Panax ginseng (Korean ginseng) protein is Small ribosomal subunit protein uS3c (rps3).